Consider the following 987-residue polypeptide: ATP-dependent 6-phosphofructokinase subunit alpha (987 aa).

The interval 1–580 (MQSQDSCYGV…LYENFLSTTV (580 aa)) is N-terminal catalytic PFK domain 1. The residue at position 3 (Ser-3) is a Phosphoserine. Lys-89 is covalently cross-linked (Glycyl lysine isopeptide (Lys-Gly) (interchain with G-Cter in ubiquitin)). Ser-166, Ser-179, Ser-185, Ser-189, and Ser-192 each carry phosphoserine. Gly-215 is an ATP binding site. Ser-217 carries the post-translational modification Phosphoserine. Residues 278–279 (RS) and 308–311 (GDGS) contribute to the ATP site. Asp-309 is a binding site for Mg(2+). Residues 354–356 (SID), Arg-391, and 398–400 (MGR) contribute to the beta-D-fructose 6-phosphate site. Residue Asp-356 is the Proton acceptor of the active site. Position 450 is a phosphothreonine (Thr-450). Beta-D-fructose 6-phosphate is bound by residues Glu-455, Lys-482, and 488–491 (HVQR). Residues 581–594 (KDDGSELLPVSDRL) are interdomain linker. The tract at residues 595-987 (NIGIVHVGAP…EVAALAAENK (393 aa)) is C-terminal regulatory PFK domain 2. Residue Lys-625 forms a Glycyl lysine isopeptide (Lys-Gly) (interchain with G-Cter in ubiquitin) linkage. Residues Arg-665, 722-726 (TVSNN), Arg-760, 767-769 (QGG), Glu-827, Arg-853, 859-862 (HVQQ), and Arg-952 each bind beta-D-fructose 2,6-bisphosphate.

Belongs to the phosphofructokinase type A (PFKA) family. ATP-dependent PFK group I subfamily. Eukaryotic two domain clade 'E' sub-subfamily. As to quaternary structure, heterooctamer of 4 alpha and 4 beta chains. Mg(2+) serves as cofactor.

Its subcellular location is the cytoplasm. The protein localises to the mitochondrion outer membrane. The catalysed reaction is beta-D-fructose 6-phosphate + ATP = beta-D-fructose 1,6-bisphosphate + ADP + H(+). The protein operates within carbohydrate degradation; glycolysis; D-glyceraldehyde 3-phosphate and glycerone phosphate from D-glucose: step 3/4. With respect to regulation, allosterically activated by ADP, AMP, or fructose 2,6-bisphosphate, and allosterically inhibited by ATP or citrate. In terms of biological role, catalyzes the phosphorylation of D-fructose 6-phosphate to fructose 1,6-bisphosphate by ATP, the first committing step of glycolysis. This Saccharomyces cerevisiae (strain ATCC 204508 / S288c) (Baker's yeast) protein is ATP-dependent 6-phosphofructokinase subunit alpha (PFK1).